The primary structure comprises 335 residues: Tetraacyldisaccharide 4'-kinase (335 aa).

An ATP-binding site is contributed by 51 to 58; the sequence is HVGGAGKT.

It belongs to the LpxK family.

It carries out the reaction a lipid A disaccharide + ATP = a lipid IVA + ADP + H(+). The protein operates within glycolipid biosynthesis; lipid IV(A) biosynthesis; lipid IV(A) from (3R)-3-hydroxytetradecanoyl-[acyl-carrier-protein] and UDP-N-acetyl-alpha-D-glucosamine: step 6/6. In terms of biological role, transfers the gamma-phosphate of ATP to the 4'-position of a tetraacyldisaccharide 1-phosphate intermediate (termed DS-1-P) to form tetraacyldisaccharide 1,4'-bis-phosphate (lipid IVA). The polypeptide is Tetraacyldisaccharide 4'-kinase (Bradyrhizobium sp. (strain ORS 278)).